The following is a 179-amino-acid chain: Ribosome maturation factor RimM (179 aa).

Residues 101–179 enclose the PRC barrel domain; that stretch reads EGEVYVHDLC…VELMHRWILE (79 aa).

This sequence belongs to the RimM family. As to quaternary structure, binds ribosomal protein uS19.

The protein localises to the cytoplasm. An accessory protein needed during the final step in the assembly of 30S ribosomal subunit, possibly for assembly of the head region. Essential for efficient processing of 16S rRNA. May be needed both before and after RbfA during the maturation of 16S rRNA. It has affinity for free ribosomal 30S subunits but not for 70S ribosomes. The protein is Ribosome maturation factor RimM of Treponema denticola (strain ATCC 35405 / DSM 14222 / CIP 103919 / JCM 8153 / KCTC 15104).